A 527-amino-acid chain; its full sequence is Tyrosine-protein kinase TXK (527 aa).

The interval 35–79 is disordered; the sequence is DEELPEKYTQRRRPWLSQLSNKKQSNTGRVQPSKRKPLPPLPPSE. Residues 51 to 64 are compositionally biased toward polar residues; sequence SQLSNKKQSNTGRV. The Nuclear localization signal motif lies at 68–73; sequence KRKPLP. Positions 82 to 142 constitute an SH3 domain; the sequence is EEKIQVKALY…PSNYVTENKI (61 aa). Y91 bears the Phosphotyrosine; by autocatalysis mark. Residues 150-246 enclose the SH2 domain; that stretch reads WYHRNITRNQ…GLMTRLRYPV (97 aa). The 257-residue stretch at 271-527 folds into the Protein kinase domain; the sequence is LAFIKEIGSG…RAVTEIAETW (257 aa). ATP contacts are provided by residues 277 to 285 and K299; that span reads IGSGQFGVV. D390 functions as the Proton acceptor in the catalytic mechanism. The residue at position 420 (Y420) is a Phosphotyrosine; by FYN and autocatalysis.

The protein belongs to the protein kinase superfamily. Tyr protein kinase family. TEC subfamily. In terms of assembly, interacts with PARP1 and EEF1A1. Interacts with SH2D2A. Interacts with FYN. In terms of processing, phosphorylated at Tyr-420 by FYN. Autophosphorylation at Tyr-91 is critical for the activation of TXK, leading to the up-regulation of IFN-gamma gene transcription. Post-translationally, the cysteine string at the N-terminus is palmitoylated and required for the proper subcellular location. In terms of tissue distribution, expressed in T-cells and some myeloid cell lines. Expressed in Th1/Th0 cells with IFN-gamma-producing potential.

The protein resides in the cytoplasm. It is found in the nucleus. It localises to the cell membrane. It carries out the reaction L-tyrosyl-[protein] + ATP = O-phospho-L-tyrosyl-[protein] + ADP + H(+). Activated by phosphorylation by FYN. Non-receptor tyrosine kinase that plays a redundant role with ITK in regulation of the adaptive immune response. Regulates the development, function and differentiation of conventional T-cells and nonconventional NKT-cells. When antigen presenting cells (APC) activate T-cell receptor (TCR), a series of phosphorylation leads to the recruitment of TXK to the cell membrane, where it is phosphorylated at Tyr-420. Phosphorylation leads to TXK full activation. Also contributes to signaling from many receptors and participates in multiple downstream pathways, including regulation of the actin cytoskeleton. Like ITK, can phosphorylate PLCG1, leading to its localization in lipid rafts and activation, followed by subsequent cleavage of its substrates. In turn, the endoplasmic reticulum releases calcium in the cytoplasm and the nuclear activator of activated T-cells (NFAT) translocates into the nucleus to perform its transcriptional duty. Plays a role in the positive regulation of IFNG transcription in T-helper 1 cells as part of an IFNG promoter-binding complex with PARP1 and EEF1A1. Within the complex, phosphorylates both PARP1 and EEF1A1. Also phosphorylates key sites in LCP2 leading to the up-regulation of Th1 preferred cytokine IL-2. Phosphorylates 'Tyr-201' of CTLA4 which leads to the association of PI-3 kinase with the CTLA4 receptor. In Homo sapiens (Human), this protein is Tyrosine-protein kinase TXK (TXK).